The sequence spans 114 residues: Cytochrome c oxidase subunit 7A2-like, mitochondrial (114 aa).

A mitochondrion-targeting transit peptide spans M1–A55. Position 69 is an N6-acetyllysine (K69). The helical transmembrane segment at P82–M107 threads the bilayer.

Belongs to the cytochrome c oxidase VIIa family. Interacts with the mitochondrial respiratory complexes III (CIII) and IV (CIV), promoting their association.

The protein localises to the mitochondrion inner membrane. Assembly factor that mediates the formation of some mitochondrial respiratory supercomplexes (respirasomes), thereby promoting oxidative phosphorylation and energy metabolism. Acts as a molecular adapter that associates with both mitochondrial respiratory complexes III (CIII) and IV (CIV), promoting their association. Mediates the formation of various mitochondrial respiratory supercomplexes, such as MCIII(2)IV(2), composed of two CIII and two CIV, and the CS-respirasome (MCI(1)III(2)IV(2)), composed of one CI, two CIII and two CIV. Not involved in the formation of the canonical respirasome (MCI(1)III(2)IV(1)), composed of one CI, two CIII and one CIV. The formation of different respirasomes is important for cell adaptation to oxygen conditions and prevent metabolic exhaustion: supercomplexes mediated by COX7A2L/SCAF1 are required to maintain oxidative phosphorylation upon low oxygen conditions and promote metabolic rewiring toward glycolysis. The polypeptide is Cytochrome c oxidase subunit 7A2-like, mitochondrial (Homo sapiens (Human)).